Here is a 264-residue protein sequence, read N- to C-terminus: Putative hydro-lyase RBAM_004300 (264 aa).

It belongs to the D-glutamate cyclase family.

The chain is Putative hydro-lyase RBAM_004300 from Bacillus velezensis (strain DSM 23117 / BGSC 10A6 / LMG 26770 / FZB42) (Bacillus amyloliquefaciens subsp. plantarum).